We begin with the raw amino-acid sequence, 303 residues long: Sulfotransferase 6B1 (303 aa).

Residue 65 to 70 (KCGSNW) participates in 3'-phosphoadenylyl sulfate binding. Histidine 118 serves as the catalytic Proton acceptor. Residues arginine 140, serine 148, tyrosine 203, 237–242 (STFQAM), and 259–261 (RKG) each bind 3'-phosphoadenylyl sulfate.

The protein belongs to the sulfotransferase 1 family. In terms of tissue distribution, specifically expressed in kidney and testis.

It is found in the cytoplasm. It localises to the cytosol. The catalysed reaction is thyroxine + 3'-phosphoadenylyl sulfate = thyroxine sulfate + adenosine 3',5'-bisphosphate + H(+). In terms of biological role, sulfotransferase that utilizes 3'-phospho-5'-adenylyl sulfate (PAPS) as sulfonate donor to catalyze the sulfate conjugation of thyroxine. Involved in the metabolism of thyroxine. The sequence is that of Sulfotransferase 6B1 (SULT6B1) from Homo sapiens (Human).